Consider the following 74-residue polypeptide: Hadrucalcin (74 aa).

An N-terminal signal peptide occupies residues M1–A27. Positions R28–R39 are excised as a propeptide. 3 disulfide bridges follow: C44–C58, C51–C62, and C57–C73. Residues R64–R65 are essential for stimulation of [3H]ryanodine binding to RYR1.

Expressed by the venom gland.

The protein resides in the secreted. This toxin activates ryanodine receptors RyR1 and RyR2 by inducing a long-lasting subconductance state (35% of the full conductance stateon RyR1). Furthermore, it triggers calcium release from sarcoplasmic vesicles (11.8 nM are enough to induce a sharp release on RyR1, and 55% of the total calcium is released after toxin (100 nM) addition on RyR1) probably by acting as a cell-penetrating peptide (CPP). In addition, it has been shown to dose-dependently stimulate ryanodine binding to RyR1 (EC(50)=14.8 nM). It also augments the bell-shaped calcium-[3H]ryanodine binding curve that is maximal at about 10 uM calcium concentration. It binds a different site as ryanodine. It acts synergistically with caffeine. In vivo, intracerebroventricular injection into mice induces neurotoxic symptoms, followed by death. The sequence is that of Hadrucalcin from Hoffmannihadrurus gertschi (Scorpion).